The following is a 226-amino-acid chain: LIM domain-containing protein PLIM2a (226 aa).

2 consecutive LIM zinc-binding domains span residues 8–68 (DKCK…LFKE) and 104–164 (DKCA…LFLE). The interval 173–226 (QAAANHRRSASSGGASPPSDDHKPDDTASIPEAKEDDAAPEAAGEEEPEPVVES) is disordered. Residues 191-209 (SDDHKPDDTASIPEAKEDD) show a composition bias toward basic and acidic residues. Residues 210–226 (AAPEAAGEEEPEPVVES) are compositionally biased toward acidic residues.

Interacts with F-actin. In terms of tissue distribution, predominantly expressed in flowers, in the tapetum and in pollen grains. Detected in leaves and stems.

The protein resides in the cytoplasm. It localises to the cytoskeleton. Binds to actin filaments and promotes cross-linking into thick bundles. Has an actin-stabilizing activity. The actin regulatory activities are inhibited by pH &gt; 6.8 but are [Ca(2+)] independent. In Arabidopsis thaliana (Mouse-ear cress), this protein is LIM domain-containing protein PLIM2a.